Here is a 933-residue protein sequence, read N- to C-terminus: Serine/threonine-protein kinase PknD (933 aa).

Positions 4–291 (YDIIRMIGKG…ELKDDIEQHL (288 aa)) constitute a Protein kinase domain. Residues 10–18 (IGKGGMGEV) and Lys33 contribute to the ATP site. The active-site Proton acceptor is Asp138.

Belongs to the protein kinase superfamily. Ser/Thr protein kinase family. In terms of processing, autophosphorylated on serine and threonine residues.

The enzyme catalyses L-seryl-[protein] + ATP = O-phospho-L-seryl-[protein] + ADP + H(+). The catalysed reaction is L-threonyl-[protein] + ATP = O-phospho-L-threonyl-[protein] + ADP + H(+). Its function is as follows. Together with the serine/threonine kinase Pkn1, may play a role in the specific interactions with host proteins during intracellular growth. The chain is Serine/threonine-protein kinase PknD from Chlamydia felis (strain Fe/C-56) (Chlamydophila felis).